The sequence spans 234 residues: Orotidine 5'-phosphate decarboxylase (234 aa).

Substrate is bound by residues aspartate 14, lysine 36, 63 to 72, threonine 118, arginine 179, glutamine 188, glycine 208, and arginine 209; that span reads DMKLLDIDNT. The active-site Proton donor is lysine 65.

This sequence belongs to the OMP decarboxylase family. Type 1 subfamily. Homodimer.

The catalysed reaction is orotidine 5'-phosphate + H(+) = UMP + CO2. It participates in pyrimidine metabolism; UMP biosynthesis via de novo pathway; UMP from orotate: step 2/2. Catalyzes the decarboxylation of orotidine 5'-monophosphate (OMP) to uridine 5'-monophosphate (UMP). The polypeptide is Orotidine 5'-phosphate decarboxylase (Rhizobium meliloti (strain 1021) (Ensifer meliloti)).